We begin with the raw amino-acid sequence, 248 residues long: Fasciclin-like arabinogalactan protein 19 (248 aa).

An N-terminal signal peptide occupies residues 1 to 29; that stretch reads MAKISSASCFRAIFLGALIILCLPHPSTG. The 132-residue stretch at 35–166 folds into the FAS1 domain; that stretch reads LERAIAILRV…IAVHGLADLL (132 aa). N-linked (GlcNAc...) asparagine glycosylation is found at N114 and N136. Over residues 213 to 226 the composition is skewed to low complexity; that stretch reads SPSVEEVSPSPSWG. The disordered stretch occupies residues 213–248; it reads SPSVEEVSPSPSWGEGEEDFIVGDEGGPLDGRNNGF.

It belongs to the fasciclin-like AGP family.

It localises to the secreted. In terms of biological role, may be a cell surface adhesion protein. In Arabidopsis thaliana (Mouse-ear cress), this protein is Fasciclin-like arabinogalactan protein 19 (FLA19).